The sequence spans 118 residues: Ribosome-binding factor A (118 aa).

The protein belongs to the RbfA family. In terms of assembly, monomer. Binds 30S ribosomal subunits, but not 50S ribosomal subunits or 70S ribosomes.

The protein resides in the cytoplasm. Its function is as follows. One of several proteins that assist in the late maturation steps of the functional core of the 30S ribosomal subunit. Associates with free 30S ribosomal subunits (but not with 30S subunits that are part of 70S ribosomes or polysomes). Required for efficient processing of 16S rRNA. May interact with the 5'-terminal helix region of 16S rRNA. This Clostridium beijerinckii (strain ATCC 51743 / NCIMB 8052) (Clostridium acetobutylicum) protein is Ribosome-binding factor A.